Reading from the N-terminus, the 412-residue chain is Histone-lysine N-methyltransferase SUV39H1 (412 aa).

Residues 1–89 (MAENLKGCSV…LKCIRVLKQF (89 aa)) are interaction with SIRT1. The Chromo domain maps to 43–101 (FEVEYLCDYKKIREQEYYLVKWRGYPDSENTWEPRQNLKCIRVLKQFHKDLERELVRRH). The Pre-SET domain occupies 179–240 (VGCECQDCLL…DCPNRVVQKG (62 aa)). Residues Cys181, Cys183, Cys186, Cys194, Cys195, Cys222, Cys226, Cys228, and Cys232 each coordinate Zn(2+). An SET domain is found at 243-366 (YDLCIFRTND…AGEELTFDYN (124 aa)). Residue 254-256 (RGW) coordinates S-adenosyl-L-methionine. Residues 255–377 (GWGVRTLEKI…QVDPVDMEST (123 aa)) form a mediates interaction with MECOM region. Lys266 is modified (N6-acetyllysine). Residues Tyr297 and 323-324 (NH) each bind S-adenosyl-L-methionine. Cys326 contacts Zn(2+). Ser391 carries the phosphoserine modification. The Post-SET domain occupies 396–412 (VRIECKCGTTACRKYLF). Zn(2+)-binding residues include Cys400, Cys402, and Cys407.

It belongs to the class V-like SAM-binding methyltransferase superfamily. Histone-lysine methyltransferase family. Suvar3-9 subfamily. Interacts with CCAR2 and GFI1B. Component of the eNoSC complex, composed of SIRT1, SUV39H1 and RRP8. Interacts with H3 and H4 histones. Interacts with DNMT3B, CBX1, CBX4, MBD1, RUNX1, RUNX3, MYOD1, SMAD5 and RB1. Interacts with SBF1 through the SET domain. Interacts with HDAC1 and HDAC2 through the N-terminus and associates with the core histone deacetylase complex composed of HDAC1, HDAC2, RBBP4 and RBBP7. Interacts (via SET domain) with MECOM; enhances MECOM transcriptional repression activity. Interacts with LMNA; the interaction increases stability of SUV39H1. The large PER complex involved in the histone methylation is composed of at least PER2, CBX3, TRIM28, SUV39H1 and/or SUV39H2; CBX3 mediates the formation of the complex. Post-translationally, phosphorylated on serine residues, and to a lesser degree, on threonine residues. Acetylated at Lys-266, leading to inhibition of enzyme activity. SIRT1-mediated deacetylation relieves this inhibition. In terms of processing, ubiquitinated by the DCX(DCAF13) E3 ubiquitin ligase complex, leading to its degradation. Widely expressed.

It is found in the nucleus. It localises to the nucleus lamina. Its subcellular location is the nucleoplasm. The protein resides in the chromosome. The protein localises to the centromere. It carries out the reaction L-lysyl(9)-[histone H3] + 3 S-adenosyl-L-methionine = N(6),N(6),N(6)-trimethyl-L-lysyl(9)-[histone H3] + 3 S-adenosyl-L-homocysteine + 3 H(+). Its activity is regulated as follows. Negatively regulated by CCAR2. Its function is as follows. Histone methyltransferase that specifically trimethylates 'Lys-9' of histone H3 using monomethylated H3 'Lys-9' as substrate. H3 'Lys-9' trimethylation represents a specific tag for epigenetic transcriptional repression by recruiting HP1 (CBX1, CBX3 and/or CBX5) proteins to methylated histones. Mainly functions in heterochromatin regions, thereby playing a central role in the establishment of constitutive heterochromatin at pericentric and telomere regions. H3 'Lys-9' trimethylation is also required to direct DNA methylation at pericentric repeats. SUV39H1 is targeted to histone H3 via its interaction with RB1 and is involved in many processes, such as repression of MYOD1-stimulated differentiation, regulation of the control switch for exiting the cell cycle and entering differentiation, repression by the PML-RARA fusion protein, BMP-induced repression, repression of switch recombination to IgA and regulation of telomere length. Component of the eNoSC (energy-dependent nucleolar silencing) complex, a complex that mediates silencing of rDNA in response to intracellular energy status and acts by recruiting histone-modifying enzymes. The eNoSC complex is able to sense the energy status of cell: upon glucose starvation, elevation of NAD(+)/NADP(+) ratio activates SIRT1, leading to histone H3 deacetylation followed by dimethylation of H3 at 'Lys-9' (H3K9me2) by SUV39H1 and the formation of silent chromatin in the rDNA locus. Recruited by the PER complex to the E-box elements of the circadian target genes such as PER2 itself or PER1, contributes to the conversion of local chromatin to a heterochromatin-like repressive state through H3 'Lys-9' trimethylation. The protein is Histone-lysine N-methyltransferase SUV39H1 (Suv39h1) of Mus musculus (Mouse).